Consider the following 181-residue polypeptide: NADH-quinone oxidoreductase subunit I (181 aa).

4Fe-4S ferredoxin-type domains lie at 44-74 (LNRYPDGLEKCIGCELCAWACPADAIYVEGA) and 90-119 (RVYQINYLRCIGCGLCIEACPTRALTMTND). [4Fe-4S] cluster is bound by residues cysteine 54, cysteine 57, cysteine 60, cysteine 64, cysteine 99, cysteine 102, cysteine 105, and cysteine 109.

Belongs to the complex I 23 kDa subunit family. As to quaternary structure, NDH-1 is composed of 14 different subunits. Subunits NuoA, H, J, K, L, M, N constitute the membrane sector of the complex. [4Fe-4S] cluster serves as cofactor.

The protein resides in the cell membrane. The catalysed reaction is a quinone + NADH + 5 H(+)(in) = a quinol + NAD(+) + 4 H(+)(out). In terms of biological role, NDH-1 shuttles electrons from NADH, via FMN and iron-sulfur (Fe-S) centers, to quinones in the respiratory chain. The immediate electron acceptor for the enzyme in this species is believed to be menaquinone. Couples the redox reaction to proton translocation (for every two electrons transferred, four hydrogen ions are translocated across the cytoplasmic membrane), and thus conserves the redox energy in a proton gradient. The chain is NADH-quinone oxidoreductase subunit I from Mycobacterium marinum (strain ATCC BAA-535 / M).